The sequence spans 277 residues: NH(3)-dependent NAD(+) synthetase (277 aa).

36–43 (GLSGGIDS) serves as a coordination point for ATP. Mg(2+) is bound at residue aspartate 42. Arginine 118 is a deamido-NAD(+) binding site. ATP is bound at residue threonine 138. Glutamate 143 is a Mg(2+) binding site. Lysine 167 and serine 189 together coordinate ATP.

This sequence belongs to the NAD synthetase family. Homodimer.

It carries out the reaction deamido-NAD(+) + NH4(+) + ATP = AMP + diphosphate + NAD(+) + H(+). The protein operates within cofactor biosynthesis; NAD(+) biosynthesis; NAD(+) from deamido-NAD(+) (ammonia route): step 1/1. Its function is as follows. Catalyzes the ATP-dependent amidation of deamido-NAD to form NAD. Uses ammonia as a nitrogen source. This Chlorobaculum parvum (strain DSM 263 / NCIMB 8327) (Chlorobium vibrioforme subsp. thiosulfatophilum) protein is NH(3)-dependent NAD(+) synthetase.